A 550-amino-acid chain; its full sequence is M-phase inducer phosphatase 1-B (550 aa).

2 disordered regions span residues 76–98 (NLGDETAPLPTESPDRISSGKVE) and 285–335 (SPSM…QRRG). A compositionally biased stretch (basic and acidic residues) spans 290–310 (EKLDRPMLKRPVRPLDSETPV). A compositionally biased stretch (polar residues) spans 322–335 (LQPQEENFQPQRRG). A Rhodanese domain is found at 401–508 (LVEKIFIIDC…FFPEYKELCE (108 aa)). Cys457 is an active-site residue.

This sequence belongs to the MPI phosphatase family.

The catalysed reaction is O-phospho-L-tyrosyl-[protein] + H2O = L-tyrosyl-[protein] + phosphate. Functionally, tyrosine protein phosphatase which functions as a dosage-dependent inducer of mitotic progression. Directly dephosphorylates CDK1 and stimulates its kinase activity. This chain is M-phase inducer phosphatase 1-B (cdc25-1-b), found in Xenopus laevis (African clawed frog).